Reading from the N-terminus, the 41-residue chain is MIKNFIFDNLIILAVPFMIKTSLKTNLIFFFLCVFVPHMAS.

A helical transmembrane segment spans residues L10–L32.

The protein localises to the cell inner membrane. This is an uncharacterized protein from Escherichia coli (strain K12).